The primary structure comprises 445 residues: Tryptamine benzoyltransferase 1 (445 aa).

Active-site proton acceptor residues include histidine 150 and aspartate 382.

The protein belongs to the plant acyltransferase family.

In terms of biological role, hydroxycinnamoyl transferase that catalyzes the transfer of an acyl from benzoyl-CoA to tryptamine, to produce benzoyl tryptamine. Serotonin and tyramine serve as acyl acceptors in vitro. Can use p-coumaroyl-CoA, and to a lesser extent caffeoyl-CoA, as acyl donors. This Oryza sativa subsp. japonica (Rice) protein is Tryptamine benzoyltransferase 1.